A 152-amino-acid polypeptide reads, in one-letter code: MWKEFKEFAMKGNVIDLAIGVIIGGAFGKIVTSLVNDIIMPVIGRLVGKVDFSNLYINLSGQQFNSLQEAQAAGAATINYGLFLNNLINFLIIAFSIFIAIKQINKLKNFTKKKEEVQVEATEKDCPYCCTKIDIKATRCPHCTSVLEEATN.

Transmembrane regions (helical) follow at residues 14–34 (VIDL…VTSL) and 81–101 (GLFL…FIAI).

Belongs to the MscL family. In terms of assembly, homopentamer.

It localises to the cell membrane. Its function is as follows. Channel that opens in response to stretch forces in the membrane lipid bilayer. May participate in the regulation of osmotic pressure changes within the cell. The sequence is that of Large-conductance mechanosensitive channel from Clostridium perfringens (strain 13 / Type A).